The following is a 369-amino-acid chain: 4-hydroxy-3-methylbut-2-en-1-yl diphosphate synthase (flavodoxin) (369 aa).

Residues Cys-270, Cys-273, Cys-305, and Glu-312 each contribute to the [4Fe-4S] cluster site.

It belongs to the IspG family. [4Fe-4S] cluster is required as a cofactor.

It carries out the reaction (2E)-4-hydroxy-3-methylbut-2-enyl diphosphate + oxidized [flavodoxin] + H2O + 2 H(+) = 2-C-methyl-D-erythritol 2,4-cyclic diphosphate + reduced [flavodoxin]. Its pathway is isoprenoid biosynthesis; isopentenyl diphosphate biosynthesis via DXP pathway; isopentenyl diphosphate from 1-deoxy-D-xylulose 5-phosphate: step 5/6. Functionally, converts 2C-methyl-D-erythritol 2,4-cyclodiphosphate (ME-2,4cPP) into 1-hydroxy-2-methyl-2-(E)-butenyl 4-diphosphate. This Pseudomonas putida (strain ATCC 700007 / DSM 6899 / JCM 31910 / BCRC 17059 / LMG 24140 / F1) protein is 4-hydroxy-3-methylbut-2-en-1-yl diphosphate synthase (flavodoxin).